A 399-amino-acid polypeptide reads, in one-letter code: Acetate kinase (399 aa).

Asn8 is a Mg(2+) binding site. Lys15 is a binding site for ATP. A substrate-binding site is contributed by Arg89. Catalysis depends on Asp146, which acts as the Proton donor/acceptor. Residues 206–210 (HVGNG), 283–285 (DMR), and 331–335 (GMGEN) contribute to the ATP site. Glu383 lines the Mg(2+) pocket.

This sequence belongs to the acetokinase family. Homodimer. The cofactor is Mg(2+). It depends on Mn(2+) as a cofactor.

The protein resides in the cytoplasm. It catalyses the reaction acetate + ATP = acetyl phosphate + ADP. It functions in the pathway metabolic intermediate biosynthesis; acetyl-CoA biosynthesis; acetyl-CoA from acetate: step 1/2. In terms of biological role, catalyzes the formation of acetyl phosphate from acetate and ATP. Can also catalyze the reverse reaction. The chain is Acetate kinase from Streptococcus equi subsp. equi (strain 4047).